The chain runs to 937 residues: CAP-Gly domain-containing linker protein 1 homolog (937 aa).

The CAP-Gly domain maps to 39–81 (GPIHGKDGMFCGIELLEPNGKHDGTFQGVSYFIATPYHGIFAP). Disordered regions lie at residues 90 to 131 (EELP…VMST) and 264 to 548 (LPND…SRLQ). Over residues 268 to 281 (LNANFSNKNSTTTF) the composition is skewed to polar residues. Basic and acidic residues predominate over residues 285–295 (ETPKVEIRENG). Residues 296 to 309 (NLDNSIETPPQQSP) are compositionally biased toward polar residues. Basic and acidic residues-rich tracts occupy residues 317-353 (HESD…KEEP), 383-396 (IEAE…EIKS), 409-424 (PQKE…ETPR), and 463-473 (AKERVEKEKKI). The segment covering 492-501 (SSIPSTSSAS) has biased composition (low complexity). Coiled coils occupy residues 566 to 740 (EDNE…VDEI) and 773 to 800 (QQIE…DLMQ). 2 disordered regions span residues 819–866 (MESR…DSMN) and 916–937 (PTIK…GLVM). Low complexity predominate over residues 832-844 (RSRSSASGSRPIS). Residues 845 to 858 (MATSNGGDQRLSTS) show a composition bias toward polar residues.

The sequence is that of CAP-Gly domain-containing linker protein 1 homolog from Caenorhabditis elegans.